The primary structure comprises 61 residues: uncharacterized protein (61 aa).

It localises to the mitochondrion. This is an uncharacterized protein from Marchantia polymorpha (Common liverwort).